Here is an 800-residue protein sequence, read N- to C-terminus: Protocadherin beta-10 (800 aa).

An N-terminal signal peptide occupies residues 1-26 (MAVRELCFPRQRQVLFLFLFWGVSLA). The Extracellular segment spans residues 27 to 692 (GSGFGRYSVT…AEADLLTVYL (666 aa)). Cadherin domains lie at 35–133 (VTEE…APVF), 138–242 (TVLK…APQF), 247–347 (YETQ…PPEL), 352–451 (FSNS…APAF), and 456–561 (YTLF…SPFV). N-linked (GlcNAc...) asparagine glycans are attached at residues N169 and N181. N418 and N436 each carry an N-linked (GlcNAc...) asparagine glycan. The N-linked (GlcNAc...) asparagine glycan is linked to N567. The Cadherin 6 domain maps to 568–671 (GSAPCTELVP…LVDGFSQPYL (104 aa)). A helical transmembrane segment spans residues 693-713 (VVALASVSSLFLLSVLLFVAV). Over 714–800 (RLCRRSRAAS…FRNSFGFNIQ (87 aa)) the chain is Cytoplasmic.

The protein localises to the cell membrane. Its function is as follows. Potential calcium-dependent cell-adhesion protein. May be involved in the establishment and maintenance of specific neuronal connections in the brain. The sequence is that of Protocadherin beta-10 (PCDHB10) from Homo sapiens (Human).